The following is a 106-amino-acid chain: Small ribosomal subunit protein uS10 (106 aa).

The protein belongs to the universal ribosomal protein uS10 family. Part of the 30S ribosomal subunit.

Its function is as follows. Involved in the binding of tRNA to the ribosomes. The sequence is that of Small ribosomal subunit protein uS10 from Prochlorococcus marinus (strain MIT 9515).